A 663-amino-acid polypeptide reads, in one-letter code: Protein LNK2 (663 aa).

Disordered stretches follow at residues 528–549 (HYTS…VIPR) and 590–663 (MEGP…KRKL). A compositionally biased stretch (basic and acidic residues) spans 602–629 (GTEEKGNFPKCSIRETHLTKQKAQKEEG). Polar residues predominate over residues 639–648 (APNSGSSSTV).

As to quaternary structure, interacts with CCA1, LHY, REV4 and REV8, but not with PRR7 or PRR9. In terms of tissue distribution, expressed in roots, stems, leaves, seedlings, cotyledons, inflorescences and siliques. Highest expression in root tips, young leaves and vasculatur tissues.

It localises to the nucleus. In terms of biological role, transcriptional coactivator necessary for expression of the clock genes PRR5 and TOC1. Antagonizes REV8 function in the regulation of anthocyanin accumulation. Involved in red light input to the clock. Activates clock-controlled genes with afternoon peak. Mediates light inhibition of hypocotyl elongation. Unable to bind to DNA, but recruited to the evening element (EE)-containing region of the PRR5 and TOC1 promoters through its interaction with the DNA binding proteins REV8 and REV4. The sequence is that of Protein LNK2 from Arabidopsis thaliana (Mouse-ear cress).